The chain runs to 116 residues: Iron-sulfur cluster insertion protein ErpA (116 aa).

Iron-sulfur cluster is bound by residues C44, C108, and C110.

It belongs to the HesB/IscA family. In terms of assembly, homodimer. It depends on iron-sulfur cluster as a cofactor.

In terms of biological role, required for insertion of 4Fe-4S clusters for at least IspG. The chain is Iron-sulfur cluster insertion protein ErpA from Stutzerimonas stutzeri (strain A1501) (Pseudomonas stutzeri).